Reading from the N-terminus, the 122-residue chain is LOB domain-containing protein 5 (122 aa).

The region spanning 8–109 is the LOB domain; the sequence is RPCSVCITKN…AYLRELQEKI (102 aa).

The protein belongs to the LOB domain-containing protein family.

This Arabidopsis thaliana (Mouse-ear cress) protein is LOB domain-containing protein 5 (LBD5).